A 269-amino-acid polypeptide reads, in one-letter code: AA9 family lytic polysaccharide monooxygenase I (269 aa).

An N-terminal signal peptide occupies residues 1–17; it reads MFSKKITALALVSAVKA. Residues histidine 18 and histidine 103 each contribute to the Cu(2+) site. Cysteine 73 and cysteine 196 are oxidised to a cystine. A glycan (N-linked (GlcNAc...) asparagine) is linked at asparagine 156. O2 contacts are provided by histidine 182 and glutamine 191. Tyrosine 193 contributes to the Cu(2+) binding site.

It belongs to the polysaccharide monooxygenase AA9 family. Cu(2+) serves as cofactor.

The protein localises to the secreted. It carries out the reaction [(1-&gt;4)-beta-D-glucosyl]n+m + reduced acceptor + O2 = 4-dehydro-beta-D-glucosyl-[(1-&gt;4)-beta-D-glucosyl]n-1 + [(1-&gt;4)-beta-D-glucosyl]m + acceptor + H2O.. In terms of biological role, lytic polysaccharide monooxygenase (LPMO) that depolymerizes crystalline and amorphous polysaccharides via the oxidation of scissile alpha- or beta-(1-4)-glycosidic bonds, yielding C1 and C4 oxidation products. Catalysis by LPMOs requires the reduction of the active-site copper from Cu(II) to Cu(I) by a reducing agent and H(2)O(2) or O(2) as a cosubstrate. The chain is AA9 family lytic polysaccharide monooxygenase I from Botryotinia fuckeliana (strain B05.10) (Noble rot fungus).